The following is a 510-amino-acid chain: NAD(P)H-quinone oxidoreductase subunit 2 B, chloroplastic (510 aa).

13 helical membrane passes run 24 to 44, 57 to 77, 99 to 119, 124 to 144, 150 to 170, 183 to 203, 229 to 249, 295 to 315, 323 to 343, 354 to 374, 395 to 415, 418 to 438, and 484 to 504; these read LLLF…GLIL, IPWL…ALLF, IFQF…VEYI, MAIT…MFLC, ITIF…SGYT, YLLM…WLYG, ISIA…PAPF, WHLL…LIAI, MLAY…IVGD, YMLF…LFGL, ALSS…AGFF, LHLF…IGLL, and MIVC…IIAI.

It belongs to the complex I subunit 2 family. NDH is composed of at least 16 different subunits, 5 of which are encoded in the nucleus.

It is found in the plastid. It localises to the chloroplast thylakoid membrane. The catalysed reaction is a plastoquinone + NADH + (n+1) H(+)(in) = a plastoquinol + NAD(+) + n H(+)(out). The enzyme catalyses a plastoquinone + NADPH + (n+1) H(+)(in) = a plastoquinol + NADP(+) + n H(+)(out). In terms of biological role, NDH shuttles electrons from NAD(P)H:plastoquinone, via FMN and iron-sulfur (Fe-S) centers, to quinones in the photosynthetic chain and possibly in a chloroplast respiratory chain. The immediate electron acceptor for the enzyme in this species is believed to be plastoquinone. Couples the redox reaction to proton translocation, and thus conserves the redox energy in a proton gradient. The chain is NAD(P)H-quinone oxidoreductase subunit 2 B, chloroplastic from Drimys granadensis.